A 163-amino-acid polypeptide reads, in one-letter code: NADH-quinone oxidoreductase subunit I (163 aa).

4Fe-4S ferredoxin-type domains are found at residues 54–84 (LRRYPNGEERCIACKLCEAVCPALAITIESD) and 94–123 (TRYDIDLTKCIFCGFCEEACPVDAVVETPI). Residues Cys64, Cys67, Cys70, Cys74, Cys103, Cys106, Cys109, and Cys113 each contribute to the [4Fe-4S] cluster site.

This sequence belongs to the complex I 23 kDa subunit family. As to quaternary structure, NDH-1 is composed of 14 different subunits. Subunits NuoA, H, J, K, L, M, N constitute the membrane sector of the complex. It depends on [4Fe-4S] cluster as a cofactor.

The protein resides in the cell inner membrane. The catalysed reaction is a quinone + NADH + 5 H(+)(in) = a quinol + NAD(+) + 4 H(+)(out). Its function is as follows. NDH-1 shuttles electrons from NADH, via FMN and iron-sulfur (Fe-S) centers, to quinones in the respiratory chain. The immediate electron acceptor for the enzyme in this species is believed to be ubiquinone. Couples the redox reaction to proton translocation (for every two electrons transferred, four hydrogen ions are translocated across the cytoplasmic membrane), and thus conserves the redox energy in a proton gradient. This is NADH-quinone oxidoreductase subunit I from Cupriavidus pinatubonensis (strain JMP 134 / LMG 1197) (Cupriavidus necator (strain JMP 134)).